We begin with the raw amino-acid sequence, 347 residues long: uncharacterized protein (347 aa).

The first 21 residues, 1–21, serve as a signal peptide directing secretion; that stretch reads MNKKSLNIVVMFGILMILAFS.

It belongs to the bacterial solute-binding protein 1 family. WtpA subfamily.

This is an uncharacterized protein from Methanococcus maripaludis (strain C5 / ATCC BAA-1333).